We begin with the raw amino-acid sequence, 570 residues long: Phytoene desaturase (570 aa).

The helical transmembrane segment at 547–567 (LFQGFLGALVAILLAYYYLVI) threads the bilayer.

Belongs to the carotenoid/retinoid oxidoreductase family. NAD(+) is required as a cofactor.

It localises to the membrane. It carries out the reaction 15-cis-phytoene + A = all-trans-phytofluene + AH2. It catalyses the reaction all-trans-phytofluene + A = all-trans-zeta-carotene + AH2. The enzyme catalyses all-trans-zeta-carotene + A = all-trans-neurosporene + AH2. The catalysed reaction is all-trans-neurosporene + A = all-trans-lycopene + AH2. Its pathway is carotenoid biosynthesis. In terms of biological role, phytoene desaturase; part of the car gene cluster that mediates the biosynthesis of neurosporaxanthin, a carboxylic apocarotenoid acting as an essential protective pigments and leading to orange pigmentation. Converts phytoene into lycopene via the intermediates phytofluene, zeta-carotene and neurosporene; and further desaturates gamma-carotene into torulene. Neurosporaxanthin is synthesized from geranyl-geranyl pyrophosphate (GGPP) through several enzymatic activities. Phytoene synthase activity performed by the bifunctional enzyme carAR first produces phytoene from geranyl-geranyl pyrophosphate (GGPP). The phytoene dehydrogenase carB then introduces 4 desaturations to lead to lycopene which is substrate of the carotene cyclase activity of carAR that leads to the production of gamma-carotene. CarB then performs a 5th desaturation reaction to yield torulene. Torulene is the substrate of the dioxidase carT that breaks the molecule, removing five carbon atoms to yield beta-apo-4'-carotenal, whereas the aldehyde dehydrogenase carD mediates the last step by converting beta-apo-4'-carotenal into neurosporaxanthin. This chain is Phytoene desaturase, found in Fusarium fujikuroi (Bakanae and foot rot disease fungus).